Here is a 147-residue protein sequence, read N- to C-terminus: Large ribosomal subunit protein bL9 (147 aa).

The protein belongs to the bacterial ribosomal protein bL9 family.

Functionally, binds to the 23S rRNA. In Campylobacter lari (strain RM2100 / D67 / ATCC BAA-1060), this protein is Large ribosomal subunit protein bL9.